The primary structure comprises 147 residues: Leghemoglobin 6 (147 aa).

The Globin domain maps to 2–147 (SFTDKQEALV…LATEIKKAMS (146 aa)). Nitrated tyrosine occurs at positions 25 and 30. A heme b-binding site is contributed by Ser45. Residue Ser45 is modified to Phosphoserine. His62 contributes to the O2 binding site. 3 residues coordinate heme b: Lys65, His94, and Lys97. Tyr135 bears the Nitrated tyrosine mark.

This sequence belongs to the plant globin family. Monomer. In terms of processing, nitrated in effective nodules and particularly in hypoxic conditions; this mechanism may play a protective role in the symbiosis by buffering toxic peroxynitrite NO(2)(-). Nitration level decrease during nodule senescence. Post-translationally, phosphorylation at Ser-45 disrupts the molecular environment of its porphyrin ring oxygen binding pocket, thus leading to a reduced oxygen consumption and to the delivery of oxygen O(2) to symbiosomes. As to expression, root nodules.

It localises to the cytoplasm. It is found in the cytosol. The protein localises to the nucleus. Leghemoglobin that reversibly binds oxygen O(2) through a pentacoordinated heme iron. In root nodules, facilitates the diffusion of oxygen to the bacteroids while preventing the bacterial nitrogenase from being inactivated by buffering dioxygen, nitric oxide and carbon monoxide, and promoting the formation of reactive oxygen species (ROS, e.g. H(2)O(2)). This role is essential for symbiotic nitrogen fixation (SNF). The protein is Leghemoglobin 6 of Medicago truncatula (Barrel medic).